The chain runs to 256 residues: Pyrroloquinoline-quinone synthase (256 aa).

Belongs to the PqqC family.

The enzyme catalyses 6-(2-amino-2-carboxyethyl)-7,8-dioxo-1,2,3,4,7,8-hexahydroquinoline-2,4-dicarboxylate + 3 O2 = pyrroloquinoline quinone + 2 H2O2 + 2 H2O + H(+). It functions in the pathway cofactor biosynthesis; pyrroloquinoline quinone biosynthesis. Functionally, ring cyclization and eight-electron oxidation of 3a-(2-amino-2-carboxyethyl)-4,5-dioxo-4,5,6,7,8,9-hexahydroquinoline-7,9-dicarboxylic-acid to PQQ. This is Pyrroloquinoline-quinone synthase from Rhizobium meliloti (strain 1021) (Ensifer meliloti).